We begin with the raw amino-acid sequence, 570 residues long: Interleukin-1 receptor accessory protein (570 aa).

The first 20 residues, 1-20 (MTLLWCVVSLYFYGILQSDA), serve as a signal peptide directing secretion. Ig-like C2-type domains are found at residues 21–128 (SERC…VAFP), 136–226 (SCFN…FHLT), and 242–350 (PPVI…VKQK). Residues 21 to 367 (SERCDDWGLD…VELACGFGAT (347 aa)) lie on the Extracellular side of the membrane. Disulfide bonds link C24-C122, C47-C114, C137-C181, C160-C212, and C266-C332. A glycan (N-linked (GlcNAc...) asparagine) is linked at N57. The segment at 69–85 (IWYWTRQDRDLEEPINF) is essential for interaction with PTPRD. N-linked (GlcNAc...) asparagine glycosylation is found at N107, N111, and N118. N-linked (GlcNAc...) asparagine glycosylation is found at N196, N209, and N299. A helical membrane pass occupies residues 368–388 (VLLVVILIVVYHVYWLEMVLF). Over 389-570 (YRAHFGTDET…GLSYSSLKNV (182 aa)) the chain is Cytoplasmic. In terms of domain architecture, TIR spans 403–546 (KEYDIYVSYA…RFWKQLQVAM (144 aa)). Residue E482 is part of the active site. A disordered region spans residues 549-570 (KKSPRRSSSDEQGLSYSSLKNV). S557 is subject to Phosphoserine. Over residues 558–570 (DEQGLSYSSLKNV) the composition is skewed to polar residues.

The protein belongs to the interleukin-1 receptor family. The interleukin-36 receptor complex is a heterodimer of IL1RL2 and IL1RAP; the association is inhibited by IL36RN. The interleukin-1 receptor complex is a heterodimer of IL1R1 and IL1RAP. Associates with IL1R2 to form a non-signaling interleukin-1 receptor complex. Interacts with IL-33-bound IL1RL1 to form the minimal interleukin-33 signaling complex with a 1:1:1 stoichiometry. Interacts with KIT (independently of stimulation with KITLG/SCF). A mast cell-specific KITLG/SCF-induced interleukin-33 signaling complex contains IL1RL1, IL1RAP, KIT and MYD88. Interacts (via the first immunoglobilin domain) with PTPRD (via the third immunoglobilin domain); induces pre- and postsynaptic differentiation of neurons.

The protein localises to the cell membrane. Its subcellular location is the secreted. The catalysed reaction is NAD(+) + H2O = ADP-D-ribose + nicotinamide + H(+). Functionally, coreceptor for IL1RL2 in the IL-36 signaling system. Coreceptor with IL1R1 in the IL-1 signaling system. Associates with IL1R1 bound to IL1B to form the high affinity interleukin-1 receptor complex which mediates interleukin-1-dependent activation of NF-kappa-B and other pathways. Signaling involves the recruitment of adapter molecules such as TOLLIP, MYD88, and IRAK1 or IRAK2 via the respective TIR domains of the receptor/coreceptor subunits. Recruits TOLLIP to the signaling complex. Does not bind to interleukin-1 alone; binding of IL1RN to IL1R1, prevents its association with IL1R1 to form a signaling complex. The cellular response is modulated through a non-signaling association with the membrane IL1R2 decoy receptor. Coreceptor for IL1RL1 in the IL-33 signaling system. Can bidirectionally induce pre- and postsynaptic differentiation of neurons by trans-synaptically binding to PTPRD. May play a role in IL1B-mediated costimulation of IFNG production from T-helper 1 (Th1) cells. Associates with secreted ligand-bound IL1R2 and increases the affinity of secreted IL1R2 for IL1B; this complex formation may be the dominant mechanism for neutralization of IL1B by secreted/soluble receptors. Enhances the ability of secreted IL1R1 to inhibit IL-33 signaling. This chain is Interleukin-1 receptor accessory protein (IL1RAP), found in Macaca mulatta (Rhesus macaque).